The following is a 288-amino-acid chain: ATP phosphoribosyltransferase (288 aa).

It belongs to the ATP phosphoribosyltransferase family. Long subfamily. It depends on Mg(2+) as a cofactor.

The protein localises to the cytoplasm. It carries out the reaction 1-(5-phospho-beta-D-ribosyl)-ATP + diphosphate = 5-phospho-alpha-D-ribose 1-diphosphate + ATP. It participates in amino-acid biosynthesis; L-histidine biosynthesis; L-histidine from 5-phospho-alpha-D-ribose 1-diphosphate: step 1/9. Its activity is regulated as follows. Feedback inhibited by histidine. Functionally, catalyzes the condensation of ATP and 5-phosphoribose 1-diphosphate to form N'-(5'-phosphoribosyl)-ATP (PR-ATP). Has a crucial role in the pathway because the rate of histidine biosynthesis seems to be controlled primarily by regulation of HisG enzymatic activity. This Methanocaldococcus jannaschii (strain ATCC 43067 / DSM 2661 / JAL-1 / JCM 10045 / NBRC 100440) (Methanococcus jannaschii) protein is ATP phosphoribosyltransferase (hisG).